A 548-amino-acid polypeptide reads, in one-letter code: LDL receptor repeat-containing protein egg-2 (548 aa).

Residues methionine 1–alanine 49 lie on the Cytoplasmic side of the membrane. Residues isoleucine 50–phenylalanine 70 form a helical; Signal-anchor for type II membrane protein membrane-spanning segment. At leucine 71–proline 548 the chain is on the extracellular side. Residue asparagine 119 is glycosylated (N-linked (GlcNAc...) asparagine). LDL-receptor class A domains are found at residues threonine 122–lysine 160, glutamate 161–arginine 213, lysine 215–asparagine 252, lysine 253–aspartate 288, threonine 291–proline 328, lysine 370–threonine 412, glutamate 416–aspartate 454, and lysine 455–serine 492. Cystine bridges form between cysteine 130–cysteine 150, cysteine 144–cysteine 159, cysteine 162–cysteine 190, cysteine 168–cysteine 203, cysteine 197–cysteine 212, cysteine 216–cysteine 229, cysteine 223–cysteine 242, cysteine 236–cysteine 251, cysteine 254–cysteine 265, cysteine 261–cysteine 278, cysteine 272–cysteine 287, cysteine 292–cysteine 305, cysteine 300–cysteine 318, cysteine 312–cysteine 327, cysteine 371–cysteine 389, cysteine 379–cysteine 402, cysteine 396–cysteine 411, cysteine 417–cysteine 431, cysteine 427–cysteine 444, cysteine 438–cysteine 453, cysteine 456–cysteine 469, cysteine 463–cysteine 482, and cysteine 476–cysteine 491. A glycan (N-linked (GlcNAc...) asparagine) is linked at asparagine 244. An N-linked (GlcNAc...) asparagine glycan is attached at asparagine 527.

It localises to the cell membrane. The protein resides in the endosome membrane. In terms of biological role, probable receptor which is required for the oocyte-to-zygote transition although its exact function is controversial. Redundantly with egg-1, seems to be required for fertilization probably by promoting the interaction or fusion between sperm and oocyte. Conversely, shown to be dispensable for fertilization but required together with egg-1 for the formation of a continuous and cohesive eggshell chitin layer by maintaining a homogenous distribution of chitin synthase chs-1 at the unfertilized oocyte cell membrane. Appears to recruit or maintain together to the unfertilized oocyte cortex several proteins including chs-1, kinase mbk-2 and pseudophosphatase egg-3, and possibly egg-4 and egg-5. This is LDL receptor repeat-containing protein egg-2 from Caenorhabditis elegans.